Reading from the N-terminus, the 963-residue chain is Protocadherin alpha-C1 (963 aa).

An N-terminal signal peptide occupies residues Met-1–Ala-18. 5 consecutive Cadherin domains span residues Ala-19–Phe-124, Pro-125–Phe-233, Glu-234–Leu-340, Val-349–Phe-445, and Pro-446–Ile-555. At Ala-19–Tyr-683 the chain is on the extracellular side. An N-linked (GlcNAc...) asparagine glycan is attached at Asn-38. Asn-248 and Asn-274 each carry an N-linked (GlcNAc...) asparagine glycan. Asn-562 carries N-linked (GlcNAc...) asparagine glycosylation. Positions Val-570–Phe-667 constitute a Cadherin 6 domain. A helical membrane pass occupies residues Leu-684 to Cys-704. Residues Thr-705–Gln-963 are Cytoplasmic-facing. 4 PXXP repeats span residues Pro-812–Pro-815, Pro-845–Pro-848, Pro-886–Pro-889, and Pro-904–Pro-907. Positions Pro-812–Pro-907 are 4 X 4 AA repeats of P-X-X-P. Positions Gly-844–Gln-963 are disordered. Over residues Asp-922 to Lys-936 the composition is skewed to basic and acidic residues.

Its subcellular location is the cell membrane. In terms of biological role, potential calcium-dependent cell-adhesion protein. May be involved in the establishment and maintenance of specific neuronal connections in the brain. The protein is Protocadherin alpha-C1 (PCDHAC1) of Homo sapiens (Human).